The chain runs to 332 residues: Pyrroline-5-carboxylate reductase (332 aa).

This sequence belongs to the pyrroline-5-carboxylate reductase family.

The catalysed reaction is L-proline + NADP(+) = (S)-1-pyrroline-5-carboxylate + NADPH + 2 H(+). It catalyses the reaction L-proline + NAD(+) = (S)-1-pyrroline-5-carboxylate + NADH + 2 H(+). It functions in the pathway amino-acid biosynthesis; L-proline biosynthesis; L-proline from L-glutamate 5-semialdehyde: step 1/1. The sequence is that of Pyrroline-5-carboxylate reductase (pro-1) from Neurospora crassa (strain ATCC 24698 / 74-OR23-1A / CBS 708.71 / DSM 1257 / FGSC 987).